The primary structure comprises 322 residues: Ferrochelatase (322 aa).

The Fe cation site is built by His-194 and Glu-275.

It belongs to the ferrochelatase family.

It localises to the cytoplasm. It carries out the reaction heme b + 2 H(+) = protoporphyrin IX + Fe(2+). Its pathway is porphyrin-containing compound metabolism; protoheme biosynthesis; protoheme from protoporphyrin-IX: step 1/1. Its function is as follows. Catalyzes the ferrous insertion into protoporphyrin IX. The protein is Ferrochelatase of Yersinia enterocolitica.